A 290-amino-acid chain; its full sequence is uncharacterized protein (290 aa).

It belongs to the UreD family.

It localises to the cytoplasm. The protein localises to the nucleus. In terms of biological role, probably facilitates nickel incorporation. This is an uncharacterized protein from Schizosaccharomyces pombe (strain 972 / ATCC 24843) (Fission yeast).